The primary structure comprises 140 residues: Granulocyte-macrophage colony-stimulating factor (140 aa).

A signal peptide spans 1 to 17 (MWLQNLLLLGTVVCSIC). A glycan (O-linked (GalNAc...) serine) is linked at Ser24. O-linked (GalNAc...) threonine glycosylation occurs at Thr27. Residues Asn45, Asn55, and Asn87 are each glycosylated (N-linked (GlcNAc...) asparagine). 2 disulfide bridges follow: Cys72–Cys114 and Cys106–Cys139.

It belongs to the GM-CSF family. As to quaternary structure, monomer. The signaling GM-CSF receptor complex is a dodecamer of two head-to-head hexamers of two alpha, two beta, and two ligand subunits.

It is found in the secreted. Functionally, cytokine that stimulates the growth and differentiation of hematopoietic precursor cells from various lineages, including granulocytes, macrophages, eosinophils and erythrocytes. The chain is Granulocyte-macrophage colony-stimulating factor (CSF2) from Cavia porcellus (Guinea pig).